A 397-amino-acid polypeptide reads, in one-letter code: Calponin-like protein clik-2 (397 aa).

Calponin-like repeat units follow at residues 29 to 54 (LSQQAGTNKFETQKGMTAVGMPRWNI), 73 to 98 (LRVQCGTNQYASQKGETPIGASRFQV), 119 to 144 (IPKQAGDYGLASQAGEVSMGGHRNQV), 161 to 189 (LCFQNGTNLFASQTGMSAPPGLGAVRQAT), 209 to 234 (TPWYSGQNKFATQAGSGGFLKVRDVL), and 255 to 280 (VPLQSGTNKLASQRGMTGFGTPRNTQ). A disordered region spans residues 301–397 (EETKPPGSAS…EEEEEEEEDE (97 aa)). Over residues 321 to 332 (KFEERESSRQSE) the composition is skewed to basic and acidic residues. 2 stretches are compositionally biased toward acidic residues: residues 344-360 (VEPEPEEEEEEEEEEKI) and 367-397 (EEEEEEEEEEEEEEEELEEEEEEEEEEEEDE).

The protein belongs to the calponin family. Expressed in pharyngeal muscle cells (at protein level).

In terms of biological role, required for pharyngeal pumping. The polypeptide is Calponin-like protein clik-2 (Caenorhabditis elegans).